Reading from the N-terminus, the 515-residue chain is Serine/threonine-protein kinase STE7 (515 aa).

The Protein kinase domain occupies 191 to 466 (LVQLGKIGAG…IHELLHHDLI (276 aa)). Residues 197–205 (IGAGNSGTV) and K220 contribute to the ATP site. D331 acts as the Proton acceptor in catalysis. Position 359 is a phosphoserine (S359). T363 bears the Phosphothreonine mark.

This sequence belongs to the protein kinase superfamily. STE Ser/Thr protein kinase family. MAP kinase kinase subfamily.

It catalyses the reaction L-seryl-[protein] + ATP = O-phospho-L-seryl-[protein] + ADP + H(+). The catalysed reaction is L-threonyl-[protein] + ATP = O-phospho-L-threonyl-[protein] + ADP + H(+). The enzyme catalyses L-tyrosyl-[protein] + ATP = O-phospho-L-tyrosyl-[protein] + ADP + H(+). Its activity is regulated as follows. Phosphorylated at multiple sites in response to pheromone. In terms of biological role, serine/threonine protein kinase required for cell-type-specific transcription and signal transduction in yeast. It is thought that it is phosphorylated by the ste11 protein kinase and that it can phosphorylate the FUS3 and or KSS1 kinases. The polypeptide is Serine/threonine-protein kinase STE7 (STE7) (Saccharomyces cerevisiae (strain ATCC 204508 / S288c) (Baker's yeast)).